The sequence spans 234 residues: Probable pectate lyase F (234 aa).

A signal peptide spans 1–17 (MWSSIAAFPVLVPVALA).

The protein belongs to the polysaccharide lyase 3 family. Ca(2+) is required as a cofactor.

It localises to the secreted. The catalysed reaction is Eliminative cleavage of (1-&gt;4)-alpha-D-galacturonan to give oligosaccharides with 4-deoxy-alpha-D-galact-4-enuronosyl groups at their non-reducing ends.. Functionally, pectinolytic enzyme consist of four classes of enzymes: pectin lyase, polygalacturonase, pectin methylesterase and rhamnogalacturonase. Among pectinolytic enzymes, pectin lyase is the most important in depolymerization of pectin, since it cleaves internal glycosidic bonds of highly methylated pectins. Favors pectate, the anion, over pectin, the methyl ester. This is Probable pectate lyase F (plyF) from Aspergillus fumigatus (strain ATCC MYA-4609 / CBS 101355 / FGSC A1100 / Af293) (Neosartorya fumigata).